Consider the following 428-residue polypeptide: MPAWIFVNRSLALGKIRCFGFDMDYTLAAYKSPAYEALTFELLLERLVCIGYPHEILRYTYDPTFPTRRLVFDELYGNLLKVDAHGNVLLGAYGFTFLSEAEIWSFYPSKFIQRDDLQCFYILNMLFNLPETYLYACLVDFFSGCSRYTNCDTGYQHGNLFMSFRSLFQDVTDAMNNIHQSGCLKKTLEDLEKYVKKDPRLPILLGKMKEVGKVFLATNSSYNYTNAIMTYLFSISEAEASGRPWRSYFDLIVVDTQKPHFFAEGLVLRQVNTDSGKLHVGTYTGPHQHCAVYSGGSSDMVCELLGVRGMDILYIGDHIFGDILKSKKRQGWRTCLVVPELSWELDIWAQEKERLEELKRLDTHLADIYQHMDGSSCELQVINFTKREIQMPHESVVEQEQANLDPASCLLSCNQRSLPAKSCLSSAI.

The active-site Nucleophile is the D22. Residues D22, D24, and D317 each coordinate Mg(2+). D24 acts as the Proton donor in catalysis.

It belongs to the 5'(3')-deoxyribonucleotidase family.

The polypeptide is 5'-nucleotidase domain-containing protein 4 (NT5DC4) (Homo sapiens (Human)).